The sequence spans 255 residues: MQFDIVTLFPDMFRALTDWGITSRAAKQERYGLRTWNPRDFTTDNYRTIDDRPYGGGPGMVMLARPLEDAINAAKAAQAEQGIGGARVVMMSPQGATLNHDKVMRFAAEPGLILLCGRYEAIDQRLIDRVVDEEVSLGDFVLSGGELPAMALIDAVVRHLPGVLNDAQSAVQDSFVDGLLDCPHYTRPEEYDGVRVPDVLLGGHHAEIEQWRRREALRNTWLKRPDLIVQARKNKLLSRADEAWLASLAKDASKH.

S-adenosyl-L-methionine-binding positions include G117 and 137–142; that span reads LGDFVL.

This sequence belongs to the RNA methyltransferase TrmD family. Homodimer.

The protein localises to the cytoplasm. It carries out the reaction guanosine(37) in tRNA + S-adenosyl-L-methionine = N(1)-methylguanosine(37) in tRNA + S-adenosyl-L-homocysteine + H(+). Functionally, specifically methylates guanosine-37 in various tRNAs. This is tRNA (guanine-N(1)-)-methyltransferase from Paraburkholderia phymatum (strain DSM 17167 / CIP 108236 / LMG 21445 / STM815) (Burkholderia phymatum).